Here is a 509-residue protein sequence, read N- to C-terminus: MGNLSRARRVTAALGFIGLLFAVLGIIMIVMVPSIIKQQVLKNVRIDPNSLSFNMWKEIPVPFYLSVYFFNIVNPEGIIQGQKPQVQEHGPYVYREFRHKSNITFNNNDTVSFLEYRSYQFQPDKSRGQESDYIVMPNILVLSASMMMENRPGLLKLMMTLAFSTLGQRAFMNRTVGEIMWGYDDPLIHLINQYFPNSLPFKGKFGLFAELNNSDSGLFTVFTGVKNFSRIHLVDKWNGVSKVNYWHSDQCNMINGTSGQMWAPFMTPESSLEFYSPEACRSMKLVYKEQGVFGGIPTFRFVAPSTLFANGSVYPPNEGFCPCRESGIQNVSTCRFNAPLFLSHPHFYNADPVLAEAVSGLHPNPKEHSLFLDIHPVTGIPMNCSVKLQLSLFVKSVKGIGQTGNIQPVVLPLMWFEESGAMEGETLETFYIQLVLMPKVLHYAQYVLLALGCVLLLIPIIYQIRSQEKCYLFWISFKKGSKDKEAVQAYSEFLMTSAPKGTVLQEARL.

Topologically, residues methionine 1–threonine 11 are cytoplasmic. A helical membrane pass occupies residues alanine 12–valine 32. Topologically, residues proline 33–valine 440 are extracellular. Residues asparagine 102, asparagine 108, asparagine 173, asparagine 212, asparagine 227, asparagine 255, asparagine 310, asparagine 330, and asparagine 383 are each glycosylated (N-linked (GlcNAc...) asparagine). The cysteines at positions 251 and 384 are disulfide-linked. Residues leucine 441–isoleucine 461 traverse the membrane as a helical segment. Residues tyrosine 462–leucine 509 lie on the Cytoplasmic side of the membrane.

Belongs to the CD36 family. N-glycosylated. Post-translationally, the six cysteines of the extracellular domain are all involved in intramolecular disulfide bonds.

Its subcellular location is the cell membrane. The protein resides in the membrane. The protein localises to the caveola. Its function is as follows. Receptor for different ligands such as phospholipids, cholesterol ester, lipoproteins, phosphatidylserine and apoptotic cells. Receptor for HDL, mediating selective uptake of cholesteryl ether and HDL-dependent cholesterol efflux. Also facilitates the flux of free and esterified cholesterol between the cell surface and apoB-containing lipoproteins and modified lipoproteins, although less efficiently than HDL. May be involved in the phagocytosis of apoptotic cells, via its phosphatidylserine binding activity. The sequence is that of Scavenger receptor class B member 1 (SCARB1) from Bos taurus (Bovine).